A 479-amino-acid chain; its full sequence is Endoglucanase 20 (479 aa).

An N-terminal signal peptide occupies residues 1–21 (MGKLLVLMLVGMFLAFESLEA). An N-linked (GlcNAc...) asparagine glycan is attached at Asn29. The Nucleophile role is filled by Asp76. His398 is a catalytic residue. N-linked (GlcNAc...) asparagine glycosylation is present at Asn442. Active-site residues include Asp449 and Glu458.

It belongs to the glycosyl hydrolase 9 (cellulase E) family.

Its subcellular location is the secreted. It carries out the reaction Endohydrolysis of (1-&gt;4)-beta-D-glucosidic linkages in cellulose, lichenin and cereal beta-D-glucans.. This chain is Endoglucanase 20, found in Arabidopsis thaliana (Mouse-ear cress).